The sequence spans 175 residues: Methylmalonyl-CoA epimerase, mitochondrial (175 aa).

The transit peptide at 1-35 directs the protein to the mitochondrion; the sequence is MARVLKVAAASAAGLFPRLRTPVSTVRTSASLSSH. Residues 46–175 enclose the VOC domain; that stretch reads RLNHVAVAVP…GGVLVELEQA (130 aa). H49 is a binding site for Co(2+). K113 is subject to N6-succinyllysine. H121 contacts Co(2+). K149 is modified (N6-acetyllysine; alternate). N6-succinyllysine; alternate is present on K149. Residue E171 participates in Co(2+) binding.

This sequence belongs to the methylmalonyl-CoA epimerase family.

It is found in the mitochondrion. The catalysed reaction is (R)-methylmalonyl-CoA = (S)-methylmalonyl-CoA. Methylmalonyl-CoA epimerase involved in propionyl-CoA metabolism. This is Methylmalonyl-CoA epimerase, mitochondrial (MCEE) from Bos taurus (Bovine).